The chain runs to 87 residues: Cell division topological specificity factor (87 aa).

It belongs to the MinE family.

Prevents the cell division inhibition by proteins MinC and MinD at internal division sites while permitting inhibition at polar sites. This ensures cell division at the proper site by restricting the formation of a division septum at the midpoint of the long axis of the cell. The chain is Cell division topological specificity factor from Acidiphilium cryptum (strain JF-5).